The sequence spans 262 residues: Adenosylcobinamide-GDP ribazoletransferase (262 aa).

A run of 4 helical transmembrane segments spans residues 43–63 (PLAG…LGAI), 121–141 (VALI…LPLL), 145–165 (GGGV…VWHW), and 195–215 (GVIL…AVLL).

The protein belongs to the CobS family. The cofactor is Mg(2+).

The protein localises to the cell inner membrane. The catalysed reaction is alpha-ribazole + adenosylcob(III)inamide-GDP = adenosylcob(III)alamin + GMP + H(+). It catalyses the reaction alpha-ribazole 5'-phosphate + adenosylcob(III)inamide-GDP = adenosylcob(III)alamin 5'-phosphate + GMP + H(+). It functions in the pathway cofactor biosynthesis; adenosylcobalamin biosynthesis; adenosylcobalamin from cob(II)yrinate a,c-diamide: step 7/7. In terms of biological role, joins adenosylcobinamide-GDP and alpha-ribazole to generate adenosylcobalamin (Ado-cobalamin). Also synthesizes adenosylcobalamin 5'-phosphate from adenosylcobinamide-GDP and alpha-ribazole 5'-phosphate. The protein is Adenosylcobinamide-GDP ribazoletransferase of Sinorhizobium medicae (strain WSM419) (Ensifer medicae).